Here is a 147-residue protein sequence, read N- to C-terminus: Transthyretin (147 aa).

Residues Met1–Ala20 form the signal peptide. Cys30 is subject to Sulfocysteine. Lys35 serves as a coordination point for L-thyroxine. Ser72 is subject to Phosphoserine. Glu74 serves as a coordination point for L-thyroxine. N-linked (GlcNAc...) asparagine glycosylation occurs at Asn118. Ser137 lines the L-thyroxine pocket.

It belongs to the transthyretin family. As to quaternary structure, homotetramer. Dimer of dimers. In the homotetramer, subunits assemble around a central channel that can accommodate two ligand molecules. Interacts with RBP4. In terms of processing, sulfonation of the reactive cysteine Cys-30 enhances the stability of the native conformation of TTR, avoiding misassembly of the protein leading to amyloid formation.

It is found in the secreted. Functionally, thyroid hormone-binding protein. Probably transports thyroxine from the bloodstream to the brain. This chain is Transthyretin (TTR), found in Macaca fascicularis (Crab-eating macaque).